The chain runs to 356 residues: 16-methoxy-2,3-dihydro-3-hydroxytabersonine synthase (356 aa).

The Zn(2+) site is built by C49, H71, C102, C105, C108, C116, and C162. Position 187–192 (187–192) interacts with NAD(+); that stretch reads GLGAVG.

This sequence belongs to the zinc-containing alcohol dehydrogenase family. It depends on Zn(2+) as a cofactor. In terms of tissue distribution, expressed in leaf epidermis.

The enzyme catalyses (3R)-3-hydroxy-16-methoxy-2,3-dihydrotabersonine + A = (3R)-1,2-didehydro-3-hydroxy-16-methoxy-2,3-dihydrotabersonine + AH2. It catalyses the reaction (3R)-3-hydroxy-2,3-dihydrotabersonine + A = (3R)-1,2-didehydro-3-hydroxy-2,3-dihydrotabersonine + AH2. The protein operates within alkaloid biosynthesis; vindoline biosynthesis. Converts the unstable imine alcohols produced by CYP71D1V2/T3O into 3-hydroxy-16-methoxy-2,3-dihydrotabersonine or 3-hydroxy-2,3-dihydrotabersonine. The polypeptide is 16-methoxy-2,3-dihydro-3-hydroxytabersonine synthase (Catharanthus roseus (Madagascar periwinkle)).